The following is a 277-amino-acid chain: Glycerol-3-phosphate acyltransferase (277 aa).

The next 5 helical transmembrane spans lie at 3–23, 55–75, 79–99, 111–131, and 155–175; these read LFIFLILVGYLMGSINSAIIV, IMVMVFDALKGILPVILAKLL, PVTVAFTALAAVVGHMYPVFF, IGALLAFHFVIGVMVAATWLL, and LILVGNLNIFPPLFMITILVL. Positions 207-277 are disordered; it reads SPATSAEQEF…PKTKTVKEKE (71 aa). Basic and acidic residues predominate over residues 216–239; the sequence is FPGKEVIDTNIDETEKTEQAEAVK. Composition is skewed to basic residues over residues 240–253 and 262–271; these read KPKVKKATTKAKKT and KPKSTKPKTK.

Belongs to the PlsY family. In terms of assembly, probably interacts with PlsX.

It localises to the cell inner membrane. The enzyme catalyses an acyl phosphate + sn-glycerol 3-phosphate = a 1-acyl-sn-glycero-3-phosphate + phosphate. The protein operates within lipid metabolism; phospholipid metabolism. Catalyzes the transfer of an acyl group from acyl-phosphate (acyl-PO(4)) to glycerol-3-phosphate (G3P) to form lysophosphatidic acid (LPA). This enzyme utilizes acyl-phosphate as fatty acyl donor, but not acyl-CoA or acyl-ACP. In Legionella pneumophila (strain Corby), this protein is Glycerol-3-phosphate acyltransferase.